The following is a 552-amino-acid chain: Scaffold protein (552 aa).

This sequence belongs to the poxviridae protein D13 family. As to quaternary structure, homotrimer. Self-assembles to form a layer. Interacts with A17 (via N-terminus); this interaction is necessary for D13 association with membranes.

The protein resides in the membrane. Functionally, scaffold protein which forms a transitory spherical honeycomb lattice providing curvature and rigidity to the convex membrane of crescent and immature virions (IV). This association occurs concomitantly with viral membrane formation. Targeted by the drug rifampicin, which prevents the formation of this lattice, and hence virus morphogenesis. In the presence of rifampicin, irregularly shaped membranes that lack the honeycomb layer accumulate around areas of electron-dense viroplasm. This layer is lost from virions during maturation from IV to mature virion (MV), through the proteolysis of A17 N-terminus. The sequence is that of Scaffold protein from Vertebrata (FPV).